The following is a 639-amino-acid chain: Threonine--tRNA ligase (639 aa).

The TGS domain occupies 1–61; sequence MIKVALKDGS…DTDCDLNLFK (61 aa). The interval 242–532 is catalytic; that stretch reads DHRKLGKELG…LIEHYAGKFP (291 aa). 3 residues coordinate Zn(2+): C333, H384, and H509.

It belongs to the class-II aminoacyl-tRNA synthetase family. Homodimer. The cofactor is Zn(2+).

Its subcellular location is the cytoplasm. The enzyme catalyses tRNA(Thr) + L-threonine + ATP = L-threonyl-tRNA(Thr) + AMP + diphosphate + H(+). Functionally, catalyzes the attachment of threonine to tRNA(Thr) in a two-step reaction: L-threonine is first activated by ATP to form Thr-AMP and then transferred to the acceptor end of tRNA(Thr). Also edits incorrectly charged L-seryl-tRNA(Thr). The chain is Threonine--tRNA ligase from Clostridioides difficile (strain 630) (Peptoclostridium difficile).